The following is a 306-amino-acid chain: ATP synthase F(1) complex subunit gamma, mitochondrial (306 aa).

Residues 1 to 17 constitute a mitochondrion transit peptide; it reads MNSASKLFVVLASPANQ.

It belongs to the ATPase gamma chain family. In terms of assembly, component of the ATP synthase complex composed at least of ATP5F1A/subunit alpha, ATP5F1B/subunit beta, ATP5MC1/subunit c (homooctomer), MT-ATP6/subunit a, MT-ATP8/subunit 8, ATP5ME/subunit e, ATP5MF/subunit f, ATP5MG/subunit g, ATP5MK/subunit k, ATP5MJ/subunit j, ATP5F1C/subunit gamma, ATP5F1D/subunit delta, ATP5F1E/subunit epsilon, ATP5PF/subunit F6, ATP5PB/subunit b, ATP5PD/subunit d, ATP5PO/subunit OSCP. ATP synthase complex consists of a soluble F(1) head domain (subunits alpha(3) and beta(3)) - the catalytic core - and a membrane F(0) domain - the membrane proton channel (subunits c, a, 8, e, f, g, k and j). These two domains are linked by a central stalk (subunits gamma, delta, and epsilon) rotating inside the F1 region and a stationary peripheral stalk (subunits F6, b, d, and OSCP).

Its subcellular location is the mitochondrion inner membrane. Functionally, subunit gamma, of the mitochondrial membrane ATP synthase complex (F(1)F(0) ATP synthase or Complex V) that produces ATP from ADP in the presence of a proton gradient across the membrane which is generated by electron transport complexes of the respiratory chain. ATP synthase complex consist of a soluble F(1) head domain - the catalytic core - and a membrane F(1) domain - the membrane proton channel. These two domains are linked by a central stalk rotating inside the F(1) region and a stationary peripheral stalk. During catalysis, ATP synthesis in the catalytic domain of F(1) is coupled via a rotary mechanism of the central stalk subunits to proton translocation. In vivo, can only synthesize ATP although its ATP hydrolase activity can be activated artificially in vitro. With the central stalk subunit delta, is essential for the biogenesis of F(1) catalytic part of the ATP synthase complex namely in the formation of F1 assembly intermediate. The protein is ATP synthase F(1) complex subunit gamma, mitochondrial of Dictyostelium discoideum (Social amoeba).